The chain runs to 151 residues: Deazaflavin-dependent nitroreductase (151 aa).

Coenzyme F420-(gamma-Glu)n contacts are provided by residues 54 to 56, 60 to 65, 76 to 79, 87 to 91, and Tyr-133; these read RKT, RVNPLY, AASK, and MWYLN.

Belongs to the F420H(2)-dependent quinone reductase family.

The protein localises to the cell membrane. The catalysed reaction is oxidized coenzyme F420-(gamma-L-Glu)(n) + a quinol + H(+) = reduced coenzyme F420-(gamma-L-Glu)(n) + a quinone. In terms of biological role, involved in a F420-dependent anti-oxidant mechanism that protects M.tuberculosis against oxidative stress and bactericidal agents. Catalyzes the F420H(2)-dependent two-electron reduction of quinones to dihydroquinones, thereby preventing the formation of cytotoxic semiquinones obtained by the one-electron reduction pathway. In vitro, catalyzes the reduction of both benzoquinone and naphthoquinone analogs; since menaquinone is the sole quinone electron carrier in the respiratory chain in M.tuberculosis, the physiological electron acceptor for Fqr-mediated F420H(2) oxidation is therefore likely to be the endogenous menaquinone found in the membrane fraction of M.tuberculosis. Is able to use F420 species with two and five glutamate residues in its polyglutamate tail. Cannot use NADH or NADPH instead of F420H(2) as the electron donor. Is involved in the bioreductive activation of bicyclic 4-nitroimidazole prodrugs such as PA-824 and delamanid developed for anti-tuberculosis therapy against both replicating and persistent bacteria. It converts PA-824 into three primary metabolites resulting from reduction of the imidazole ring at C-3; the major one is the corresponding des-nitroimidazole that generates lethal reactive nitrogen species, including nitric oxide (NO), which appears to be responsible for the anaerobic killing activity. Ddn uses the reduced F420 produced by FGD1 to activate PA-824. Delamanid (OPC-67683) is also reduced by Ddn to its des-nitro form. In Mycobacterium tuberculosis (strain CDC 1551 / Oshkosh), this protein is Deazaflavin-dependent nitroreductase (ddn).